The primary structure comprises 232 residues: Modulator of macroautophagy TMEM150B (232 aa).

Residues 1–6 (MWAWAL) are Cytoplasmic-facing. The chain crosses the membrane as a helical span at residues 7 to 27 (LPVFLAVFGTVGLWAVYAIAV). Residues 28-50 (SNNSVNITIEFPYISTCGAYTPQ) are Extracellular-facing. 2 N-linked (GlcNAc...) asparagine glycosylation sites follow: asparagine 29 and asparagine 33. Residues 51-71 (SCLFAQICNICCVLALWIVVI) form a helical membrane-spanning segment. At 72 to 83 (RFQQIRDLGRSS) the chain is on the cytoplasmic side. Residues 84 to 104 (HLNTAGLVLGFISSIGISILG) form a helical membrane-spanning segment. The Extracellular segment spans residues 105–115 (NFQQTIIQEVH). The helical transmembrane segment at 116-136 (LLGALMAFFLGLAYFWIQAFI) threads the bilayer. The Cytoplasmic portion of the chain corresponds to 137-153 (TYFSPPSRDNKWLVPVR). The helical transmembrane segment at 154–174 (FVLCSQCTCMVICMFVLHSTG) threads the bilayer. Residues 175–177 (FRS) lie on the Extracellular side of the membrane. A helical transmembrane segment spans residues 178–198 (AAAICEWILVMCFFALFGVFA). Over 199 to 232 (AEFRHIDFHKLTVQKEGLKVANNDNVVWTVQDVQ) the chain is Cytoplasmic.

Belongs to the DRAM/TMEM150 family.

Its subcellular location is the cell membrane. It localises to the endosome membrane. The protein localises to the cytoplasmic vesicle. It is found in the autophagosome membrane. Functionally, modulator of macroautophagy that causes accumulation of autophagosomes under basal conditions and enhances autophagic flux. Represses cell death and promotes long-term clonogenic survival of cells grown in the absence of glucose in a macroautophagy-independent manner. May have some role in extracellular matrix engulfment or growth factor receptor recycling, both of which can modulate cell survival. This chain is Modulator of macroautophagy TMEM150B, found in Danio rerio (Zebrafish).